The sequence spans 163 residues: Nucleotide-binding protein tll0793 (163 aa).

Belongs to the YajQ family.

Functionally, nucleotide-binding protein. In Thermosynechococcus vestitus (strain NIES-2133 / IAM M-273 / BP-1), this protein is Nucleotide-binding protein tll0793.